Here is a 160-residue protein sequence, read N- to C-terminus: SsrA-binding protein (160 aa).

The disordered stretch occupies residues Lys-136–Asp-160.

The protein belongs to the SmpB family.

It is found in the cytoplasm. Its function is as follows. Required for rescue of stalled ribosomes mediated by trans-translation. Binds to transfer-messenger RNA (tmRNA), required for stable association of tmRNA with ribosomes. tmRNA and SmpB together mimic tRNA shape, replacing the anticodon stem-loop with SmpB. tmRNA is encoded by the ssrA gene; the 2 termini fold to resemble tRNA(Ala) and it encodes a 'tag peptide', a short internal open reading frame. During trans-translation Ala-aminoacylated tmRNA acts like a tRNA, entering the A-site of stalled ribosomes, displacing the stalled mRNA. The ribosome then switches to translate the ORF on the tmRNA; the nascent peptide is terminated with the 'tag peptide' encoded by the tmRNA and targeted for degradation. The ribosome is freed to recommence translation, which seems to be the essential function of trans-translation. The polypeptide is SsrA-binding protein (Ectopseudomonas mendocina (strain ymp) (Pseudomonas mendocina)).